Reading from the N-terminus, the 411-residue chain is Adherens junction-associated protein 1 (411 aa).

The signal sequence occupies residues 1 to 43 (MWIQQLLGLSSMPIRWPGRSLGSHLWILIAMLQLAVDFPSCDS). Topologically, residues 44–283 (LGPGPEFRLL…GETSGLAVHQ (240 aa)) are extracellular. 3 stretches are compositionally biased toward low complexity: residues 62 to 76 (LWSLRTGPPTRLPTP), 121 to 145 (PPAATRSSPSLTSASASSSMTAGAA), and 247 to 264 (TPVGVSTTEPSTSPSNNG). Disordered stretches follow at residues 62 to 156 (LWSL…RGRR) and 242 to 270 (DPWKRTPVGVSTTEPSTSPSNNGKDIQPP). The chain crosses the membrane as a helical span at residues 284 to 304 (IITITVSLIMVIAALITTLVL). The targeting signals stretch occupies residues 304–411 (LKNCCAPSGH…VSEKWFEISC (108 aa)). Over 305-411 (KNCCAPSGHT…VSEKWFEISC (107 aa)) the chain is Cytoplasmic.

Forms a complex with CDH1 and CTNNB1; interacts directly with CTNNB1. Interacts with AP1M2 and with isoform 2 of BSG/CD147.

The protein resides in the basolateral cell membrane. It is found in the apical cell membrane. Its subcellular location is the cell junction. The protein localises to the adherens junction. Functionally, plays a role in cell adhesion and cell migration. In Rattus norvegicus (Rat), this protein is Adherens junction-associated protein 1 (Ajap1).